A 366-amino-acid chain; its full sequence is tRNA/tmRNA (uracil-C(5))-methyltransferase (366 aa).

Q190, Y218, N223, E239, and D299 together coordinate S-adenosyl-L-methionine. C324 functions as the Nucleophile in the catalytic mechanism. Catalysis depends on E358, which acts as the Proton acceptor.

This sequence belongs to the class I-like SAM-binding methyltransferase superfamily. RNA M5U methyltransferase family. TrmA subfamily.

It catalyses the reaction uridine(54) in tRNA + S-adenosyl-L-methionine = 5-methyluridine(54) in tRNA + S-adenosyl-L-homocysteine + H(+). It carries out the reaction uridine(341) in tmRNA + S-adenosyl-L-methionine = 5-methyluridine(341) in tmRNA + S-adenosyl-L-homocysteine + H(+). Its function is as follows. Dual-specificity methyltransferase that catalyzes the formation of 5-methyluridine at position 54 (m5U54) in all tRNAs, and that of position 341 (m5U341) in tmRNA (transfer-mRNA). In Edwardsiella ictaluri (strain 93-146), this protein is tRNA/tmRNA (uracil-C(5))-methyltransferase.